We begin with the raw amino-acid sequence, 152 residues long: Ribonuclease HI (152 aa).

The RNase H type-1 domain occupies 1–142 (MDSKVVIYTD…ADKLAVQGRE (142 aa)). The Mg(2+) site is built by D10, E48, D70, and D134.

It belongs to the RNase H family. In terms of assembly, monomer. Requires Mg(2+) as cofactor.

The protein localises to the cytoplasm. It catalyses the reaction Endonucleolytic cleavage to 5'-phosphomonoester.. Endonuclease that specifically degrades the RNA of RNA-DNA hybrids. The polypeptide is Ribonuclease HI (Rickettsia conorii (strain ATCC VR-613 / Malish 7)).